We begin with the raw amino-acid sequence, 530 residues long: MPYNLKQLFQKHNVKGLSINSKTVKENDIFFAIKGQNVDGNDFINEVLNQAVALVITDNKKNTIIDDKVIYVEDVQVALYEAIEIFYPKKPKNLIAVTGTNGKSSVVSYIAQTYSLLGKKAASIGTIGVEIFGCDNLINDVPELTTLDYLSFRKIAHNLAENNIEYLAFEASSHGLNQARLGEIKVNTACFTSFSQDHLDYHHTKENYLLAKLKLFTRHLFKPAYREEFKGDTEHSTTAYILVREDASTGSTSKLLLEAKFGKMSTEYLLQGGLAILNSDIAEIEFVKDYLRNHNIKFITVGKKGDVQITKINGSLKAQNINFIFNNRECSFNTSIIGSFQASNLLIAALSIHYIGFDFNKIIEILTQVKPVKGRMERIGNTNIFVDYSHTPDALEKALTELKNVKLRDSRLNVVFGCGGNRDKTKRSLMGQIAARLADNVIITDDNPRHEDPKLIRAEIISGIEKADYTEIANREEAIKYGINNLKQDDILLIAGKGHENYQIIGDKKLPFDDAEIVRKLMSLRGKAKP.

Serine 21 is a binding site for UDP-N-acetyl-alpha-D-muramoyl-L-alanyl-D-glutamate. Glycine 99 to serine 105 serves as a coordination point for ATP. UDP-N-acetyl-alpha-D-muramoyl-L-alanyl-D-glutamate contacts are provided by residues threonine 145–threonine 146, serine 172, glutamine 178, and arginine 180. N6-carboxylysine is present on lysine 212. Residues phenylalanine 221–leucine 269 form the RPE1 insert domain. Residues arginine 422, aspartate 446–arginine 449, glycine 496, and glutamate 500 contribute to the meso-2,6-diaminopimelate site. The Meso-diaminopimelate recognition motif signature appears at aspartate 446 to arginine 449.

Belongs to the MurCDEF family. MurE subfamily. It depends on Mg(2+) as a cofactor. In terms of processing, carboxylation is probably crucial for Mg(2+) binding and, consequently, for the gamma-phosphate positioning of ATP.

It is found in the cytoplasm. The catalysed reaction is UDP-N-acetyl-alpha-D-muramoyl-L-alanyl-D-glutamate + meso-2,6-diaminopimelate + ATP = UDP-N-acetyl-alpha-D-muramoyl-L-alanyl-gamma-D-glutamyl-meso-2,6-diaminopimelate + ADP + phosphate + H(+). The protein operates within cell wall biogenesis; peptidoglycan biosynthesis. Its function is as follows. Catalyzes the addition of meso-diaminopimelic acid to the nucleotide precursor UDP-N-acetylmuramoyl-L-alanyl-D-glutamate (UMAG) in the biosynthesis of bacterial cell-wall peptidoglycan. This is UDP-N-acetylmuramoyl-L-alanyl-D-glutamate--2,6-diaminopimelate ligase from Rickettsia felis (strain ATCC VR-1525 / URRWXCal2) (Rickettsia azadi).